Reading from the N-terminus, the 116-residue chain is U16-barytoxin-Tl1f (116 aa).

The N-terminal stretch at 1–20 is a signal peptide; that stretch reads MKTIIVFLSLLVLATKFGDA. Residues 21 to 74 constitute a propeptide that is removed on maturation; the sequence is NEGVNQEQMKEVIQNEFREDFLNEMAPMSLLQQLEAIESTLLEKEADRNSRQKR. Intrachain disulfides connect cysteine 75–cysteine 90, cysteine 82–cysteine 95, and cysteine 89–cysteine 110. Asparagine 85 is a glycosylation site (N-linked (GlcNAc...) asparagine).

The protein belongs to the neurotoxin 14 (magi-1) family. 06 (ICK-Trit) subfamily. As to expression, expressed by the venom gland.

Its subcellular location is the secreted. Ion channel inhibitor. In Trittame loki (Brush-footed trapdoor spider), this protein is U16-barytoxin-Tl1f.